The chain runs to 224 residues: Urease accessory protein UreF (224 aa).

It belongs to the UreF family. UreD, UreF and UreG form a complex that acts as a GTP-hydrolysis-dependent molecular chaperone, activating the urease apoprotein by helping to assemble the nickel containing metallocenter of UreC. The UreE protein probably delivers the nickel.

The protein localises to the cytoplasm. Required for maturation of urease via the functional incorporation of the urease nickel metallocenter. The sequence is that of Urease accessory protein UreF from Pseudomonas putida (strain ATCC 700007 / DSM 6899 / JCM 31910 / BCRC 17059 / LMG 24140 / F1).